Here is a 406-residue protein sequence, read N- to C-terminus: Luteothin monooxygenase (406 aa).

Residues His98, Arg102, Arg296, Gly350, His353, and Cys355 each coordinate heme b.

This sequence belongs to the cytochrome P450 family. As to quaternary structure, monomer. Heme b serves as cofactor.

It carries out the reaction luteothin + 4 reduced [2Fe-2S]-[ferredoxin] + 2 O2 + 4 H(+) = aureothin + 4 oxidized [2Fe-2S]-[ferredoxin] + 3 H2O. It functions in the pathway antibiotic biosynthesis. The protein operates within polyketide biosynthesis. Its function is as follows. Bifunctional cytochrome P450 protein involved in the biosynthesis of the antibiotic aureothin, a nitroaryl polyketide metabolite with antifungal, cytotoxic and insecticidal activities. Catalyzes the hydroxylation of luteothin (also called deoxyaureothin), leading to the formation of the intermediate (7R)-7-hydroxydeoxyaureothin, followed by the formation of the aureothin tetrahydrofuran ring, the final step in the biosynthesis of aureothin. In Streptomyces thioluteus, this protein is Luteothin monooxygenase.